We begin with the raw amino-acid sequence, 335 residues long: GTPase Obg (335 aa).

An Obg domain is found at 1 to 158 (MFVDQITLEL…RQVELELKLI (158 aa)). The interval 126–145 (NTFFKTSVNRAPTKATPGKP) is disordered. An OBG-type G domain is found at 159–334 (ADIGLVGFPN…LYRFFTQRLA (176 aa)). GTP contacts are provided by residues 165–172 (GFPNAGKS), 190–194 (FTTLA), 215–218 (DIPG), 285–288 (NKID), and 315–317 (SGL). Mg(2+) contacts are provided by Ser172 and Thr192.

This sequence belongs to the TRAFAC class OBG-HflX-like GTPase superfamily. OBG GTPase family. As to quaternary structure, monomer. The cofactor is Mg(2+).

It is found in the cytoplasm. In terms of biological role, an essential GTPase which binds GTP, GDP and possibly (p)ppGpp with moderate affinity, with high nucleotide exchange rates and a fairly low GTP hydrolysis rate. Plays a role in control of the cell cycle, stress response, ribosome biogenesis and in those bacteria that undergo differentiation, in morphogenesis control. This Chlamydia pneumoniae (Chlamydophila pneumoniae) protein is GTPase Obg.